The sequence spans 497 residues: Putative BTB/POZ domain-containing protein R738 (497 aa).

A BTB domain is found at 16–86; sequence SDCKLVLDDG…FYEKSNVINA (71 aa).

This sequence belongs to the mimivirus BTB/WD family.

The sequence is that of Putative BTB/POZ domain-containing protein R738 from Acanthamoeba polyphaga (Amoeba).